Consider the following 132-residue polypeptide: Agouti-signaling protein (132 aa).

The N-terminal stretch at Met-1–Ser-22 is a signal peptide. Residue Asn-39 is glycosylated (N-linked (GlcNAc...) asparagine). The interval Ile-62–Cys-93 is disordered. Residues Arg-64–Lys-79 show a composition bias toward basic and acidic residues. Intrachain disulfides connect Cys-93-Cys-108, Cys-100-Cys-114, Cys-107-Cys-125, Cys-111-Cys-132, and Cys-116-Cys-123. An Agouti domain is found at Cys-93–Cys-132.

The protein resides in the secreted. Its function is as follows. Involved in the regulation of melanogenesis. The binding of ASP to MC1R precludes alpha-MSH initiated signaling and thus blocks production of cAMP, leading to a down-regulation of eumelanogenesis (brown/black pigment) and thus increasing synthesis of pheomelanin (yellow/red pigment). The polypeptide is Agouti-signaling protein (ASIP) (Leontopithecus chrysomelas (Golden-headed lion tamarin)).